An 83-amino-acid polypeptide reads, in one-letter code: Cytochrome b559 subunit alpha (83 aa).

A helical transmembrane segment spans residues 21–35 (VIHSITIPSLFIAGW). Residue His-23 participates in heme binding.

Belongs to the PsbE/PsbF family. In terms of assembly, heterodimer of an alpha subunit and a beta subunit. PSII is composed of 1 copy each of membrane proteins PsbA, PsbB, PsbC, PsbD, PsbE, PsbF, PsbH, PsbI, PsbJ, PsbK, PsbL, PsbM, PsbT, PsbX, PsbY, PsbZ, Psb30/Ycf12, at least 3 peripheral proteins of the oxygen-evolving complex and a large number of cofactors. It forms dimeric complexes. Heme b serves as cofactor.

It localises to the plastid. It is found in the chloroplast thylakoid membrane. In terms of biological role, this b-type cytochrome is tightly associated with the reaction center of photosystem II (PSII). PSII is a light-driven water:plastoquinone oxidoreductase that uses light energy to abstract electrons from H(2)O, generating O(2) and a proton gradient subsequently used for ATP formation. It consists of a core antenna complex that captures photons, and an electron transfer chain that converts photonic excitation into a charge separation. In Piper cenocladum (Ant piper), this protein is Cytochrome b559 subunit alpha.